The following is a 355-amino-acid chain: Peptide chain release factor 1 (355 aa).

N5-methylglutamine is present on Gln231. A compositionally biased stretch (basic and acidic residues) spans 280-291 (SERLAKESEARK). Residues 280–303 (SERLAKESEARKSQVGSGDRSERI) form a disordered region.

Belongs to the prokaryotic/mitochondrial release factor family. Methylated by PrmC. Methylation increases the termination efficiency of RF1.

It localises to the cytoplasm. Its function is as follows. Peptide chain release factor 1 directs the termination of translation in response to the peptide chain termination codons UAG and UAA. The polypeptide is Peptide chain release factor 1 (Campylobacter jejuni (strain RM1221)).